The sequence spans 337 residues: Tetraacyldisaccharide 4'-kinase (337 aa).

58–65 is an ATP binding site; the sequence is TVGGSGKT.

Belongs to the LpxK family.

The enzyme catalyses a lipid A disaccharide + ATP = a lipid IVA + ADP + H(+). It functions in the pathway glycolipid biosynthesis; lipid IV(A) biosynthesis; lipid IV(A) from (3R)-3-hydroxytetradecanoyl-[acyl-carrier-protein] and UDP-N-acetyl-alpha-D-glucosamine: step 6/6. Functionally, transfers the gamma-phosphate of ATP to the 4'-position of a tetraacyldisaccharide 1-phosphate intermediate (termed DS-1-P) to form tetraacyldisaccharide 1,4'-bis-phosphate (lipid IVA). This chain is Tetraacyldisaccharide 4'-kinase, found in Shewanella putrefaciens (strain CN-32 / ATCC BAA-453).